Here is a 609-residue protein sequence, read N- to C-terminus: UvrABC system protein C (609 aa).

Residues 19–97 (ISPGCYLWKS…IKKHNPRFNV (79 aa)) enclose the GIY-YIG domain. Residues 208-243 (ESLVGDLSIKMSASSNRMDFEKAARYRDMLQRIQNF) enclose the UVR domain.

The protein belongs to the UvrC family. Interacts with UvrB in an incision complex.

Its subcellular location is the cytoplasm. In terms of biological role, the UvrABC repair system catalyzes the recognition and processing of DNA lesions. UvrC both incises the 5' and 3' sides of the lesion. The N-terminal half is responsible for the 3' incision and the C-terminal half is responsible for the 5' incision. The protein is UvrABC system protein C of Leptospira borgpetersenii serovar Hardjo-bovis (strain JB197).